We begin with the raw amino-acid sequence, 425 residues long: Enolase (425 aa).

Glutamine 162 is a (2R)-2-phosphoglycerate binding site. The active-site Proton donor is the glutamate 204. Residues aspartate 241, glutamate 282, and aspartate 309 each contribute to the Mg(2+) site. The (2R)-2-phosphoglycerate site is built by lysine 334, arginine 363, serine 364, and lysine 385. The active-site Proton acceptor is the lysine 334.

Belongs to the enolase family. The cofactor is Mg(2+).

It localises to the cytoplasm. Its subcellular location is the secreted. The protein resides in the cell surface. The catalysed reaction is (2R)-2-phosphoglycerate = phosphoenolpyruvate + H2O. The protein operates within carbohydrate degradation; glycolysis; pyruvate from D-glyceraldehyde 3-phosphate: step 4/5. Catalyzes the reversible conversion of 2-phosphoglycerate (2-PG) into phosphoenolpyruvate (PEP). It is essential for the degradation of carbohydrates via glycolysis. The protein is Enolase of Micrococcus luteus (strain ATCC 4698 / DSM 20030 / JCM 1464 / CCM 169 / CCUG 5858 / IAM 1056 / NBRC 3333 / NCIMB 9278 / NCTC 2665 / VKM Ac-2230) (Micrococcus lysodeikticus).